Reading from the N-terminus, the 650-residue chain is DNA ligase (650 aa).

NAD(+)-binding positions include 30–34 (DEEYD), 79–80 (SL), and Asp-108. Lys-110 functions as the N6-AMP-lysine intermediate in the catalytic mechanism. Residues Arg-131, Glu-165, and Lys-304 each coordinate NAD(+). The Zn(2+) site is built by Cys-398, Cys-401, Cys-414, and Cys-419. The region spanning 573–650 (PQDSPIAGKS…EEELGEILES (78 aa)) is the BRCT domain.

Belongs to the NAD-dependent DNA ligase family. LigA subfamily. The cofactor is Mg(2+). Requires Mn(2+) as cofactor.

The enzyme catalyses NAD(+) + (deoxyribonucleotide)n-3'-hydroxyl + 5'-phospho-(deoxyribonucleotide)m = (deoxyribonucleotide)n+m + AMP + beta-nicotinamide D-nucleotide.. DNA ligase that catalyzes the formation of phosphodiester linkages between 5'-phosphoryl and 3'-hydroxyl groups in double-stranded DNA using NAD as a coenzyme and as the energy source for the reaction. It is essential for DNA replication and repair of damaged DNA. The protein is DNA ligase of Wolinella succinogenes (strain ATCC 29543 / DSM 1740 / CCUG 13145 / JCM 31913 / LMG 7466 / NCTC 11488 / FDC 602W) (Vibrio succinogenes).